Consider the following 293-residue polypeptide: Protease HtpX homolog (293 aa).

2 helical membrane-spanning segments follow: residues 4–24 and 40–60; these read VILF…TLRI and ALLM…LLIS. H146 contributes to the Zn(2+) binding site. The active site involves E147. H150 contacts Zn(2+). 2 consecutive transmembrane segments (helical) span residues 161 to 181 and 198 to 218; these read LIQG…GYFV and VTVI…VAWF. Zn(2+) is bound at residue E223.

This sequence belongs to the peptidase M48B family. Zn(2+) serves as cofactor.

Its subcellular location is the cell inner membrane. This is Protease HtpX homolog from Bordetella avium (strain 197N).